The following is a 225-amino-acid chain: Protein-L-isoaspartate O-methyltransferase (225 aa).

Residue Ser75 is part of the active site.

The protein belongs to the methyltransferase superfamily. L-isoaspartyl/D-aspartyl protein methyltransferase family.

The protein localises to the cytoplasm. It catalyses the reaction [protein]-L-isoaspartate + S-adenosyl-L-methionine = [protein]-L-isoaspartate alpha-methyl ester + S-adenosyl-L-homocysteine. Its function is as follows. Catalyzes the methyl esterification of L-isoaspartyl residues in peptides and proteins that result from spontaneous decomposition of normal L-aspartyl and L-asparaginyl residues. It plays a role in the repair and/or degradation of damaged proteins. The chain is Protein-L-isoaspartate O-methyltransferase from Xanthomonas campestris pv. campestris (strain 8004).